The primary structure comprises 256 residues: Type III pantothenate kinase (256 aa).

6–13 (DVGNSHIY) contributes to the ATP binding site. Substrate is bound by residues Tyr-99 and 106–109 (GADR). Asp-108 serves as the catalytic Proton acceptor. Asp-129 provides a ligand contact to K(+). Thr-132 contributes to the ATP binding site. Thr-184 contacts substrate.

Belongs to the type III pantothenate kinase family. In terms of assembly, homodimer. NH4(+) serves as cofactor. It depends on K(+) as a cofactor.

Its subcellular location is the cytoplasm. The enzyme catalyses (R)-pantothenate + ATP = (R)-4'-phosphopantothenate + ADP + H(+). The protein operates within cofactor biosynthesis; coenzyme A biosynthesis; CoA from (R)-pantothenate: step 1/5. Its function is as follows. Catalyzes the phosphorylation of pantothenate (Pan), the first step in CoA biosynthesis. In Legionella pneumophila (strain Paris), this protein is Type III pantothenate kinase.